We begin with the raw amino-acid sequence, 141 residues long: Small ribosomal subunit protein bS16 (141 aa).

The segment at 84-141 (TRKARSNPEKSKPKAKAQERLEAARMAEEEAAAAAKAAAEAPAEEAPAAEAPAEEAQA) is disordered. The segment covering 89–111 (SNPEKSKPKAKAQERLEAARMAE) has biased composition (basic and acidic residues). The span at 115–141 (AAAAKAAAEAPAEEAPAAEAPAEEAQA) shows a compositional bias: low complexity.

It belongs to the bacterial ribosomal protein bS16 family.

The chain is Small ribosomal subunit protein bS16 from Parvibaculum lavamentivorans (strain DS-1 / DSM 13023 / NCIMB 13966).